The chain runs to 493 residues: Glutamate--tRNA ligase (493 aa).

The 'HIGH' region motif lies at 10 to 20 (PSPTGDPHVGT). A 'KMSKS' region motif is present at residues 251–255 (KLSKR). Lys-254 provides a ligand contact to ATP.

The protein belongs to the class-I aminoacyl-tRNA synthetase family. Glutamate--tRNA ligase type 1 subfamily. Monomer.

It localises to the cytoplasm. The catalysed reaction is tRNA(Glu) + L-glutamate + ATP = L-glutamyl-tRNA(Glu) + AMP + diphosphate. Functionally, catalyzes the attachment of glutamate to tRNA(Glu) in a two-step reaction: glutamate is first activated by ATP to form Glu-AMP and then transferred to the acceptor end of tRNA(Glu). The polypeptide is Glutamate--tRNA ligase (Pseudomonas entomophila (strain L48)).